Reading from the N-terminus, the 1114-residue chain is MRGALQAVALWGRKAPPHSITAIMITDDQQTIVTGSQEGQLCLWSLSPELKISAKELLFGHSASVTCLARARDFSKQPYVVSAAENGEMCMWNVSSGQCVEKTSLPYRHTAICYYHCSFRMTGEGWLLCCGEYQDVLVLDAGTLAVLHTFTSLQSPDWMKCMCIVHSVRIQEDSLLVVSITGELKVWDLSSSINSIQEKQDVHEKESKFLDSFNCQTIRFCPYTERLLLVVFSKCWKIYDYCDFSLLWTEVSRDGQFFAGGEVLAAHRILVWTEDGHSYIYQLLNRWAQMGATLRTFSGLSKCVCPADGGVLKGTVYPHLLCSTSVEENKSLHFVMGYMNERKEPFYKVLFSGEVSGRITLWHIPDVPISKFDGSPREIPITTTWTLQDNFDKHQMVSQSITDHFSGSRDEVGMTATITSSEYIPNLDKLICGCEDGTIFITKALNAAKAGLLEGDSLLKDSPCHTLLRGHHQSVTSLLYPHNLASKLDQSWMVSGDRGSYVILWDIFTEEILHTFFLEAGPVTRLLMSPENLKRSDGQILCCVCGDHSVALLHLEGRRCLLRARKHLFPVRMIRWHPVENFLIVGCTDDSVYIWEIETGTLERHETGERARIILNCGDDAQLIRSEPTLSVASETHKHKSIEQKSSNSHQPGPVPCPSVQLESSCKVADASSVPRPFNVLPVKTKWSHIGFHVLLFDLENLVELLLPTPLSDVDPSGSFYGGDILRRAKSTVEKKTLTIRRNKASCSSLQTEAQAKPSGDSLVLGDSTSKFSEENNGIKRQKKMKSSKKAHPKPPRKVDASLTIDMAKLFLSCILPWGVDKDLDSLCTRHLSILKLQGPVSLGLASNEDLFSLMLPGWDACSTEMKEYSGVNLCSRKVLDLSSKYTATLLHQTGIPRGLESHCDSVQQSDAIVYLLSRLFLVNKLVNMPLDLACEIDRPFKMETVHSKARFPGSDILNISSFYGHPKNGGNECRAPEADLSLLKLISCWRDQSVQVTEAIQAVLLAEVQQHMKSLRNTPVSSQPDPVAEHSICERMQISAKMEWTEELELQYVGKSSPLKTSVSPVKHGNDLNSANFQDTEDILDRCVLEESESAGQPRHRPWIAKVCSCRMC.

WD repeat units lie at residues 15–54 (APPH…KISA), 60–102 (GHSA…CVEK), 160–197 (KCMC…NSIQ), 327–373 (EENK…SKFD), 413–452 (GMTA…KAGL), 470–515 (GHHQ…ILHT), and 566–605 (KHLF…LERH). Disordered stretches follow at residues 634–658 (SETH…VPCP) and 749–798 (SLQT…PPRK). The segment covering 780–796 (KRQKKMKSSKKAHPKPP) has biased composition (basic residues). Residues Ser1093 and Ser1095 each carry the phosphoserine modification.

As to expression, expressed in maturation stage ameloblasts (at protein level).

It localises to the cytoplasmic vesicle. Its function is as follows. Plays a major role in formation of tooth enamel. Specifically required during the maturation phase of amelogenesis for normal formation of the enamel matrix and clearance of enamel proteins. May be involved in localization of the calcium transporter SLC24A4 to the ameloblast cell membrane. The sequence is that of WD repeat-containing protein 72 from Mus musculus (Mouse).